A 498-amino-acid chain; its full sequence is Glycerol kinase (498 aa).

Position 12 (Thr-12) interacts with ADP. Residues Thr-12, Thr-13, and Ser-14 each coordinate ATP. Sn-glycerol 3-phosphate is bound at residue Thr-12. ADP is bound at residue Arg-16. Residues Arg-82, Glu-83, Tyr-134, and Asp-243 each contribute to the sn-glycerol 3-phosphate site. Residues Arg-82, Glu-83, Tyr-134, Asp-243, and Gln-244 each coordinate glycerol. Residues Thr-265 and Gly-308 each contribute to the ADP site. ATP-binding residues include Thr-265, Gly-308, Gln-312, and Gly-409. Residues Gly-409 and Asn-413 each contribute to the ADP site.

It belongs to the FGGY kinase family.

It catalyses the reaction glycerol + ATP = sn-glycerol 3-phosphate + ADP + H(+). Its pathway is polyol metabolism; glycerol degradation via glycerol kinase pathway; sn-glycerol 3-phosphate from glycerol: step 1/1. Inhibited by fructose 1,6-bisphosphate (FBP). Functionally, key enzyme in the regulation of glycerol uptake and metabolism. Catalyzes the phosphorylation of glycerol to yield sn-glycerol 3-phosphate. The polypeptide is Glycerol kinase (Petrotoga mobilis (strain DSM 10674 / SJ95)).